The primary structure comprises 751 residues: Catalase-peroxidase (751 aa).

Positions M1–A12 are cleaved as a signal peptide. Positions W91–Y241 form a cross-link, tryptophyl-tyrosyl-methioninium (Trp-Tyr) (with M-267). The active-site Proton acceptor is H92. A cross-link (tryptophyl-tyrosyl-methioninium (Tyr-Met) (with W-91)) is located at residues Y241 to M267. H282 serves as a coordination point for heme b.

This sequence belongs to the peroxidase family. Peroxidase/catalase subfamily. In terms of assembly, homodimer or homotetramer. It depends on heme b as a cofactor. In terms of processing, formation of the three residue Trp-Tyr-Met cross-link is important for the catalase, but not the peroxidase activity of the enzyme.

The catalysed reaction is H2O2 + AH2 = A + 2 H2O. It carries out the reaction 2 H2O2 = O2 + 2 H2O. Its function is as follows. Bifunctional enzyme with both catalase and broad-spectrum peroxidase activity. In Cupriavidus necator (strain ATCC 17699 / DSM 428 / KCTC 22496 / NCIMB 10442 / H16 / Stanier 337) (Ralstonia eutropha), this protein is Catalase-peroxidase.